Consider the following 503-residue polypeptide: Cytochrome P450 3A25 (503 aa).

Residue Cys442 coordinates heme.

Belongs to the cytochrome P450 family. The cofactor is heme.

It is found in the endoplasmic reticulum membrane. The protein resides in the microsome membrane. It catalyses the reaction an organic molecule + reduced [NADPH--hemoprotein reductase] + O2 = an alcohol + oxidized [NADPH--hemoprotein reductase] + H2O + H(+). Its function is as follows. Cytochromes P450 are a group of heme-thiolate monooxygenases. In liver microsomes, this enzyme is involved in an NADPH-dependent electron transport pathway. It oxidizes a variety of structurally unrelated compounds, including steroids, fatty acids, and xenobiotics. The sequence is that of Cytochrome P450 3A25 (Cyp3a25) from Mus musculus (Mouse).